Consider the following 205-residue polypeptide: Dr1-associated corepressor (205 aa).

Residues Pro-14–Glu-77 form the Histone-fold domain. A disordered region spans residues Pro-91–Ser-205. Residues Glu-98–Pro-108 are compositionally biased toward basic and acidic residues. Residues Ser-138 to Thr-155 show a composition bias toward acidic residues. The segment covering Pro-172 to Pro-192 has biased composition (pro residues). Positions Asp-196 to Ser-205 are enriched in acidic residues.

It belongs to the NC2 alpha/DRAP1 family. In terms of assembly, heterodimer with DR1. Binds BTAF1. Phosphorylation reduces DNA binding, but has no effect on heterodimerization and TBP binding.

It localises to the nucleus. In terms of biological role, the association of the DR1/DRAP1 heterodimer with TBP results in a functional repression of both activated and basal transcription of class II genes. This interaction precludes the formation of a transcription-competent complex by inhibiting the association of TFIIA and/or TFIIB with TBP. Can bind to DNA on its own. The polypeptide is Dr1-associated corepressor (Drap1) (Mus musculus (Mouse)).